Here is a 701-residue protein sequence, read N- to C-terminus: Elongation factor G (701 aa).

The tr-type G domain maps to 8–290; that stretch reads ERYRNIGISA…AVVDYLPAPT (283 aa). Residues 17–24, 88–92, and 142–145 contribute to the GTP site; these read AHIDAGKT, DTPGH, and NKMD.

It belongs to the TRAFAC class translation factor GTPase superfamily. Classic translation factor GTPase family. EF-G/EF-2 subfamily.

It localises to the cytoplasm. Its function is as follows. Catalyzes the GTP-dependent ribosomal translocation step during translation elongation. During this step, the ribosome changes from the pre-translocational (PRE) to the post-translocational (POST) state as the newly formed A-site-bound peptidyl-tRNA and P-site-bound deacylated tRNA move to the P and E sites, respectively. Catalyzes the coordinated movement of the two tRNA molecules, the mRNA and conformational changes in the ribosome. The chain is Elongation factor G from Aeromonas salmonicida (strain A449).